We begin with the raw amino-acid sequence, 140 residues long: Nucleoside diphosphate kinase (140 aa).

ATP-binding residues include Lys11, Phe59, Arg87, Thr93, Arg104, and Asn114. The active-site Pros-phosphohistidine intermediate is His117.

It belongs to the NDK family. In terms of assembly, homotetramer. It depends on Mg(2+) as a cofactor.

It is found in the cytoplasm. It carries out the reaction a 2'-deoxyribonucleoside 5'-diphosphate + ATP = a 2'-deoxyribonucleoside 5'-triphosphate + ADP. The enzyme catalyses a ribonucleoside 5'-diphosphate + ATP = a ribonucleoside 5'-triphosphate + ADP. Its function is as follows. Major role in the synthesis of nucleoside triphosphates other than ATP. The ATP gamma phosphate is transferred to the NDP beta phosphate via a ping-pong mechanism, using a phosphorylated active-site intermediate. The chain is Nucleoside diphosphate kinase from Rickettsia prowazekii (strain Madrid E).